The sequence spans 85 residues: Hepcidin (85 aa).

The signal sequence occupies residues 1-24 (MKTFSVAVAVAVVLAFICLQESSA). The propeptide occupies 25–64 (VPANEEQELEQQIYFADPEMPVESCKMPYYMRENRQGSPA). 4 disulfide bridges follow: Cys66-Cys83, Cys69-Cys72, Cys70-Cys79, and Cys73-Cys82.

In terms of assembly, monomer. In terms of tissue distribution, expressed in all tissues tested, with highest levels of expression in kidney and lowest levels in liver. Intra-peritoneal injection of lipopolysaccharide results in increased expression in heart, spleen and stomach, but not in kidney or liver.

It localises to the secreted. Seems to act as a signaling molecule involved in the maintenance of iron homeostasis. Seems to be required in conjunction with HFE to regulate both intestinal iron absorption and iron storage in macrophages. Its function is as follows. Has very strong antibacterial activity against the marine Gram-negative bacteria V.alginolyticus (MIC=24 uM), V.fluvialis, V.harveyis (MIC=12 uM) and V.parahaemolyticus (MIC=6 uM). Has antibacterial activity against the Gram-negative bacteria A.hydrophila (MIC=6 uM), E.coli (MIC=24 uM), and E.coli BL21(DE3)plysS (MIC=6 uM), and the Gram-positive bacteria B.cereus (MIC=24 uM), B.subtilis (MIC=6 uM), C.glutamicum (MIC=3 uM), M.luteus (MIC=3 uM), M.lysodeikticus, S.aureus (MIC=6 uM) and S.epidermis (MIC=12 uM). Possesses antifungal activity against A.niger (MIC=24 uM), F.graminearum (MIC24 uM) and F.solani (MIC=24 uM), but lacks antifungal activity against the yeasts P.pastoris GS115 and C.albicans. This chain is Hepcidin, found in Larimichthys crocea (Large yellow croaker).